The primary structure comprises 408 residues: Two-pore potassium channel 5 (408 aa).

Disordered regions lie at residues 1–29 (MEPLISPQPRFRLQPIPENPSSSSSSASI) and 58–82 (QSVQDDKEDQDSDSDETNRFLSQTR). Residues 15-29 (PIPENPSSSSSSASI) are compositionally biased toward low complexity. Topologically, residues 22–115 (SSSSSASITI…TKKPSPVSKS (94 aa)) are stromal. Over residues 63 to 72 (DKEDQDSDSD) the composition is skewed to acidic residues. Residues 116–136 (IIRQAIFLLIVYLTLGVSIYS) traverse the membrane as a helical segment. The pore-forming intramembrane region spans 152–171 (DALYFCIVTMCTIGYGDIAP). A helical membrane pass occupies residues 178-198 (IFAVVFVLFGFGFLDILLSGV). Over 199 to 248 (VNYVLDLQESMILTGIQTRQHHQHHHHHRFSAKDYIIDFEKGRMRIRMKV) the chain is Stromal. Residues 249-269 (CLALCVVVLCIGVGALVLHFV) form a helical membrane-spanning segment. The segment at residues 276–295 (DSVYLSVMSVTTVGYGDRAF) is an intramembrane region (pore-forming). A helical transmembrane segment spans residues 302–322 (LFAAVWLLVSTLAVARAFLYL). Residues 323–408 (AEARIDRRHR…TLPDLLGDPL (86 aa)) lie on the Stromal side of the membrane. EF-hand domains lie at 339-374 (LNREITVDDLLKADTYQHGFISKSEYIVLKLKEMGK) and 378-408 (KDIDQVVIQFEKLDPNQIGKITLPDLLGDPL). Residues Asp-352, Glu-363, Asp-391, Asn-393, Lys-397, and Asp-402 each coordinate Ca(2+).

Belongs to the two pore domain potassium channel (TC 1.A.1.7) family. As to quaternary structure, homodimer. As to expression, expressed in hydathodes and the vascular tissues of roots, stems, leaves and flowers.

It localises to the vacuole membrane. In terms of biological role, probable voltage-independent potassium-selective tonoplast ion channel. The sequence is that of Two-pore potassium channel 5 (TPK5) from Arabidopsis thaliana (Mouse-ear cress).